Here is a 458-residue protein sequence, read N- to C-terminus: Forkhead box protein J1-A (458 aa).

Polar residues predominate over residues 68 to 78; sequence TGQHTSPSSHS. Residues 68-99 form a disordered region; sequence TGQHTSPSSHSHLMGSDAPSSPLAGDPASIGM. Positions 142-236 form a DNA-binding region, fork-head; the sequence is KPPYSYATLI…LNGAYKKRRL (95 aa). Residues 305-321 are compositionally biased toward basic residues; sequence TNKRKQPYNHRTGKTPR. Residues 305–324 are disordered; sequence TNKRKQPYNHRTGKTPRRSS.

Belongs to the FOXJ1 family. In terms of tissue distribution, expressed in floor plate, dorsal forerunner cells, Kupffers vesicle, the floor plate, pronephric ducts and kidney.

The protein resides in the nucleus. Its function is as follows. Key transcription factor required for motile ciliogenesis. Activates genes essential for motile cilia formation and function. Its activity is sufficient for ectopic development of cilia that resemble motile cilia. This Danio rerio (Zebrafish) protein is Forkhead box protein J1-A.